We begin with the raw amino-acid sequence, 512 residues long: Glucagon-like peptide 2 receptor (512 aa).

The Extracellular portion of the chain corresponds to M1–T135. Disulfide bonds link C43-C65, C56-C97, and C78-C119. The N-linked (GlcNAc...) asparagine glycan is linked to N73. Residues L136–T160 form a helical membrane-spanning segment. Residues L161–R172 lie on the Cytoplasmic side of the membrane. Residues N173–F197 traverse the membrane as a helical segment. Topologically, residues Y198–R223 are extracellular. The chain crosses the membrane as a helical span at residues S224–L247. Residues H248–L261 are Cytoplasmic-facing. The chain crosses the membrane as a helical span at residues W262–V283. Topologically, residues R284–I301 are extracellular. Residues W302–L324 form a helical membrane-spanning segment. Residues K325–S348 are Cytoplasmic-facing. A helical membrane pass occupies residues T349 to T367. Topologically, residues D368–R379 are extracellular. The helical transmembrane segment at L380–F400 threads the bilayer. Topologically, residues A401–I512 are cytoplasmic. Positions S458–E494 are disordered.

Belongs to the G-protein coupled receptor 2 family.

The protein localises to the cell membrane. In terms of biological role, this is a receptor for glucagon-like peptide 2. The activity of this receptor is mediated by G proteins which activate adenylyl cyclase. The polypeptide is Glucagon-like peptide 2 receptor (Glp2r) (Mus musculus (Mouse)).